A 312-amino-acid polypeptide reads, in one-letter code: MTIKRKKVSVIGAGFTGATTAFLLAQKELADVVLVDIPQLENPTKGKALDMLEASPVQGFDANIIGTSDYADTADSDVVVITAGIARKPGMSRDDLVATNSKIMKSITRDIAKHSPNAIIVVLTNPVDAMTYSVFKEAGFPKERVIGQSGVLDTARFRTFIAQELNFSVKDITGFVLGGHGDDMVPLVRYSYAGGIPLETLIPKERLEAIVERTRKGGGEIVGLLGNGSAYYAPAASLVEMTEAILKDQRRVLPAIAYLEGEYGYSDLYLGVPVILGGNGIEKIIELELLADEKEALDRSVESVRNVMKVLV.

Residues 12 to 17 and D36 each bind NAD(+); that span reads GAGFTG. R87 and R93 together coordinate substrate. NAD(+) is bound by residues N100 and 123 to 125; that span reads LTN. Residue N125 coordinates substrate. Position 149 is a phosphoserine (S149). R156 is a binding site for substrate. Residue H180 is the Proton acceptor of the active site.

It belongs to the LDH/MDH superfamily. MDH type 3 family.

The catalysed reaction is (S)-malate + NAD(+) = oxaloacetate + NADH + H(+). Catalyzes the reversible oxidation of malate to oxaloacetate. The polypeptide is Malate dehydrogenase (Bacillus cereus (strain ZK / E33L)).